The primary structure comprises 372 residues: Cytochrome b (372 aa).

Transmembrane regions (helical) follow at residues 25 to 45, 69 to 90, 105 to 125, and 170 to 190; these read FGSM…FLAI, WIMQ…YIHI, WLSG…GYVL, and FFAL…IHIM. Heme b-binding residues include histidine 75 and histidine 89. Heme b contacts are provided by histidine 174 and histidine 188. Histidine 193 lines the a ubiquinone pocket. 4 helical membrane passes run 218–238, 280–300, 312–332, and 339–358; these read YKDM…LSFS, LGGT…PFTH, LSQI…WTAS, and FILI…IMAP.

The protein belongs to the cytochrome b family. In terms of assembly, the cytochrome bc1 complex contains 3 respiratory subunits (MT-CYB, CYC1 and UQCRFS1), 2 core proteins (UQCRC1 and UQCRC2) and probably 6 low-molecular weight proteins. It depends on heme b as a cofactor.

The protein resides in the mitochondrion inner membrane. In terms of biological role, component of the ubiquinol-cytochrome c reductase complex (complex III or cytochrome b-c1 complex) that is part of the mitochondrial respiratory chain. The b-c1 complex mediates electron transfer from ubiquinol to cytochrome c. Contributes to the generation of a proton gradient across the mitochondrial membrane that is then used for ATP synthesis. In Hemachatus haemachatus (Rinkhals), this protein is Cytochrome b (MT-CYB).